Here is a 1193-residue protein sequence, read N- to C-terminus: MYIKQIRLKGFRTYKNETTIDFTRGINCIVGFNGSGKSNILLAIEFILSDVCEYKQIYLHEGIGNAVRNCYVEIIFDNSEKYFSMFKESEIKIKKVLENMKCEIFVNDKNISKNQYVELLESCGLCINNLYNIIKQGQIIKLSNMKDEEILNYLKSILGAKIFEEKKKDALSMLKECDSKKVTIEKEFNDMNSKLESLQEEFENFLEYKKLEKEKVHLDYFLNEINYKNIYEETQMLKSKLQELKNKTQDEDNHLNLSNNNKSEYNEKLNKMKLEIASCQNHLNKTISEDIQNKRNIVHLQMLIDEKIKEKNIKESQNKNRIKNINQINEFILRVNEKLQSLKSDIVSKEKQIENKNNEINMLLSKNKNKNTDANYSHNVKKIEKMINDINIELSFLEKETIKNEKYLKELEEESKVLNKSIKENETLSQKYGSEINELNNKSEKCVEQKRQCQQKISEGTTNLNEIKCQIIEVNDKYDEIIKSSNKEILKIVDLIMAEKSIKRENILGFLIDNINVDKTYVKAVDTILENHYFTLIVEDMQTAKKIVEFIEKKREERTSKEFNFKEFYFGKLTIVPLLNIKKFNEFNYPNDKNIVPLIKCVNYNSKIYEFLKNILFKTIIVKSLESCENYLEDNYNCVNIDGDYLSKHGFMYGGYNKKKYGIYTVYNKLKELKEEEKKEKSHIEELNNNIEKIDDELRNIYDTKSSTVAKKNGCASTINSINNNIYSNEENIRLTSEKINYIQEKKQNLEQHKDQLKMQILQLRNNNVNPDESEKVGSTDINSLNDEVKKLKEELNKIRNEYDDFKNKLELLYQKRNENDSSIYMEEYEDVDIDEYNNDLADKKDHSDKIEKEKIHYEQKIREINKEMENVKSSIDKILINEKKHKKKILDLCHQMNQINEELRILEGKEENIRKKKVLLPQGIQELEEYRTYDKQQLSAKLKSVTMELKKYSNVNEKAGDRLNILMNDFNELKKRHEEINSSHKNIKDMIQHIGKKKDEALEATYVKINKYFSEYFSLLFKNRKASLVLKKMNEKEYKEKLQEMSEKRIKRRIIDEEVYIDKITGISINITSNDDEKMTYTIQELSGGERSIVAICLFLCLNKIDNFSFFFFDEIDAALDTIHRDNLSLLLKELAHRGTQFIITTFRKELLEYSDNMYIVKIVDRESYISKGTKNEAYEIISIEEKHALEN.

31 to 38 (GFNGSGKS) lines the ATP pocket. Lysine 101 carries the post-translational modification N6-acetyllysine. 2 coiled-coil regions span residues 179–286 (SKKV…LNKT) and 332–483 (ILRV…EIIK). Positions 505 to 631 (ENILGFLIDN…VKSLESCENY (127 aa)) constitute an SMC hinge domain. Positions 665 to 993 (TVYNKLKELK…SHKNIKDMIQ (329 aa)) form a coiled coil.

This sequence belongs to the SMC family. SMC3 subfamily. Component of the cohesin complex. Acetylation at Lys-101 by ESCO1 is important for genome stability and S phase sister chromatid cohesion.

It is found in the nucleus. In terms of biological role, central component of cohesin, a complex required for chromosome cohesion during the cell cycle. The cohesin complex may form a large proteinaceous ring within which sister chromatids can be trapped. At anaphase, the complex is cleaved and dissociates from chromatin, allowing sister chromatids to segregate. Cohesion is coupled to DNA replication and is involved in DNA repair. The cohesin complex also plays an important role in spindle pole assembly during mitosis and in chromosomes movement. The chain is Structural maintenance of chromosomes protein 3 homolog from Plasmodium falciparum (isolate 3D7).